Reading from the N-terminus, the 291-residue chain is METVRAPATSANLGSGFDVFGVALDRPADIVRVERADKTTIEVTGVGSQYIPEDPHSNVVGAVAEALDAPAQIQIDKGVRPSSGLGSSAASAAAAAVALNGLYDRGLSRTELVPIAAEGEAIVSGEAHVDNVAPALLGGFTIARNSTVTTVDTTIPLVACLPEIAVSTRDARRVVPDSITMEEAVHTVGSAATLTVGMCQSNPALVGAGMDEHVVTPARAELVTGYDTVREAALTAGATGVTVSGAGPAILAVCKAERRRAVAAAMIDAFETADVEARAYQTCVSAGATLF.

80 to 90 serves as a coordination point for ATP; it reads RPSSGLGSSAA.

The protein belongs to the GHMP kinase family. Homoserine kinase subfamily.

Its subcellular location is the cytoplasm. The enzyme catalyses L-homoserine + ATP = O-phospho-L-homoserine + ADP + H(+). Its pathway is amino-acid biosynthesis; L-threonine biosynthesis; L-threonine from L-aspartate: step 4/5. Catalyzes the ATP-dependent phosphorylation of L-homoserine to L-homoserine phosphate. This chain is Homoserine kinase, found in Haloquadratum walsbyi (strain DSM 16790 / HBSQ001).